The primary structure comprises 540 residues: Phosphoenolpyruvate carboxykinase (ATP) (540 aa).

R65 is a substrate binding site. An N6-acetyllysine modification is found at K87. Substrate-binding residues include Y207 and K213. Residues K213, H232, and 248–256 (GLSGTGKTT) contribute to the ATP site. K213 and H232 together coordinate Mn(2+). Position 269 (D269) interacts with Mn(2+). ATP is bound by residues E297, R333, 449-450 (RI), and T455. Residue R333 coordinates substrate. Residue K523 is modified to N6-acetyllysine.

Belongs to the phosphoenolpyruvate carboxykinase (ATP) family. As to quaternary structure, monomer. Mn(2+) is required as a cofactor.

It is found in the cytoplasm. The enzyme catalyses oxaloacetate + ATP = phosphoenolpyruvate + ADP + CO2. It functions in the pathway carbohydrate biosynthesis; gluconeogenesis. Its function is as follows. Involved in the gluconeogenesis. Catalyzes the conversion of oxaloacetate (OAA) to phosphoenolpyruvate (PEP) through direct phosphoryl transfer between the nucleoside triphosphate and OAA. The polypeptide is Phosphoenolpyruvate carboxykinase (ATP) (Shigella dysenteriae serotype 1 (strain Sd197)).